Reading from the N-terminus, the 761-residue chain is Elongation factor G, mitochondrial (761 aa).

The transit peptide at 1 to 42 (MSVQKMMRVPRKMVGGRIPFFTCSKVFSGFSRRSFHESPLAR) directs the protein to the mitochondrion. Residues 68 to 349 (NKLRNIGISA…AIVDYLPNPS (282 aa)) enclose the tr-type G domain. Residues 77–84 (AHIDSGKT), 148–152 (DTPGH), and 202–205 (NKMD) contribute to the GTP site.

Belongs to the TRAFAC class translation factor GTPase superfamily. Classic translation factor GTPase family. EF-G/EF-2 subfamily. The precursor is processed in two steps involving mitochondrial intermediate peptidase (MIP) and mitochondrial processing peptidase (MPP).

The protein localises to the mitochondrion. Its pathway is protein biosynthesis; polypeptide chain elongation. Mitochondrial GTPase that catalyzes the GTP-dependent ribosomal translocation step during translation elongation. During this step, the ribosome changes from the pre-translocational (PRE) to the post-translocational (POST) state as the newly formed A-site-bound peptidyl-tRNA and P-site-bound deacylated tRNA move to the P and E sites, respectively. Catalyzes the coordinated movement of the two tRNA molecules, the mRNA and conformational changes in the ribosome. The protein is Elongation factor G, mitochondrial of Saccharomyces cerevisiae (strain YJM789) (Baker's yeast).